We begin with the raw amino-acid sequence, 134 residues long: Small ribosomal subunit protein uS9 (134 aa).

The disordered stretch occupies residues 109–134 (DARRTEPHKPSKSSKGPRARRQKSYR). The segment covering 118–134 (PSKSSKGPRARRQKSYR) has biased composition (basic residues).

This sequence belongs to the universal ribosomal protein uS9 family.

The chain is Small ribosomal subunit protein uS9 from Methanococcus vannielii (strain ATCC 35089 / DSM 1224 / JCM 13029 / OCM 148 / SB).